Here is a 421-residue protein sequence, read N- to C-terminus: MSKTHLTEQKFSDFALHPQVVEALEKKGFYNCTPIQALALPLTLAGRDVAGQAQTGTGKTMAFLTSTFHYLLSHPAIDDRKVNQPRALIMAPTRELAVQIHADAEPLAQVTGLKLGLAYGGDGYDKQLKVLESGVDILIGTTGRLIDYAKQNHINLGAIQVVVLDEADRMYDLGFIKDIRWLFRRMPPAAQRLNMLFSATLSYRVRELAFEQMNNAEYVEVEPEQKTGHRIKEELFYPSNEEKMRLLQTLIEEEWPDRAIIFANTKHRCEDIWGHLAADGHRVGLLTGDVAQKKRLRILDEFTRGDLDILVATDVAARGLHIPAVTHVFNYDLPDDCEDYVHRIGRTGRAGASGHSISLACEEYALNLPAIESYIGHSIPVSKYNPEALMTDLPKPLRLTRSRPGNGPRRAGAPRNRRRSG.

The Q motif signature appears at 9 to 37 (QKFSDFALHPQVVEALEKKGFYNCTPIQA). The Helicase ATP-binding domain maps to 40–219 (LPLTLAGRDV…FEQMNNAEYV (180 aa)). Residue 53-60 (AQTGTGKT) coordinates ATP. The DEAD box signature appears at 165–168 (DEAD). The Helicase C-terminal domain occupies 245-390 (RLLQTLIEEE…VSKYNPEALM (146 aa)). A disordered region spans residues 396-421 (PLRLTRSRPGNGPRRAGAPRNRRRSG). Low complexity predominate over residues 402 to 414 (SRPGNGPRRAGAP).

This sequence belongs to the DEAD box helicase family. RhlB subfamily. Component of the RNA degradosome, which is a multiprotein complex involved in RNA processing and mRNA degradation.

The protein localises to the cytoplasm. It catalyses the reaction ATP + H2O = ADP + phosphate + H(+). Its function is as follows. DEAD-box RNA helicase involved in RNA degradation. Has RNA-dependent ATPase activity and unwinds double-stranded RNA. The protein is ATP-dependent RNA helicase RhlB of Salmonella arizonae (strain ATCC BAA-731 / CDC346-86 / RSK2980).